A 198-amino-acid chain; its full sequence is MAAITAAMVKELREKTAAGMMDCKKALQECDGDEAKAVDWLRQKGLSKAAKKADRATSEGLIGSYIHSNGKIGVMVELKCETDFVARNEQFIELAKNLAMQIAATNPVAVDENGVDAELIERERAVYREKALAEGKPENIVEKIVDGAIKKYYKEVCLLEQPFIRDDKKVIRDLLNDTIATLGENITVGRFCRFQLGA.

An involved in Mg(2+) ion dislocation from EF-Tu region spans residues 82 to 85; it reads TDFV.

It belongs to the EF-Ts family.

Its subcellular location is the cytoplasm. In terms of biological role, associates with the EF-Tu.GDP complex and induces the exchange of GDP to GTP. It remains bound to the aminoacyl-tRNA.EF-Tu.GTP complex up to the GTP hydrolysis stage on the ribosome. The sequence is that of Elongation factor Ts from Oleidesulfovibrio alaskensis (strain ATCC BAA-1058 / DSM 17464 / G20) (Desulfovibrio alaskensis).